Consider the following 210-residue polypeptide: Large ribosomal subunit protein uL4 (210 aa).

The segment covering methionine 41–lysine 52 has biased composition (polar residues). A disordered region spans residues methionine 41 to serine 80. A compositionally biased stretch (basic residues) spans glycine 60–glycine 71.

It belongs to the universal ribosomal protein uL4 family. As to quaternary structure, part of the 50S ribosomal subunit.

In terms of biological role, one of the primary rRNA binding proteins, this protein initially binds near the 5'-end of the 23S rRNA. It is important during the early stages of 50S assembly. It makes multiple contacts with different domains of the 23S rRNA in the assembled 50S subunit and ribosome. Functionally, forms part of the polypeptide exit tunnel. This Acaryochloris marina (strain MBIC 11017) protein is Large ribosomal subunit protein uL4.